Reading from the N-terminus, the 139-residue chain is MASLKKSRRVRLILFSGVALVSATALIGYAMRDGIQFFRTPTEVATDPPAANEVLRIGGMVEHGSLVRDGANFSFRVTDGETSFPISYVGIVPDLFREGEGTIATGSVIGGVFRATEILAKHDEVYMPSELAEMEALRD.

At 1 to 9 (MASLKKSRR) the chain is on the cytoplasmic side. The chain crosses the membrane as a helical; Signal-anchor for type II membrane protein span at residues 10-30 (VRLILFSGVALVSATALIGYA). Over 31–139 (MRDGIQFFRT…ELAEMEALRD (109 aa)) the chain is Periplasmic. Residues H122 and Y126 each contribute to the heme site.

This sequence belongs to the CcmE/CycJ family.

It localises to the cell inner membrane. In terms of biological role, heme chaperone required for the biogenesis of c-type cytochromes. Transiently binds heme delivered by CcmC and transfers the heme to apo-cytochromes in a process facilitated by CcmF and CcmH. This Ruegeria pomeroyi (strain ATCC 700808 / DSM 15171 / DSS-3) (Silicibacter pomeroyi) protein is Cytochrome c-type biogenesis protein CcmE 2.